The chain runs to 530 residues: Arginine--tRNA ligase (530 aa).

Positions 113 to 123 (ANPTGPLHIGH) match the 'HIGH' region motif.

It belongs to the class-I aminoacyl-tRNA synthetase family. As to quaternary structure, monomer.

It is found in the cytoplasm. It carries out the reaction tRNA(Arg) + L-arginine + ATP = L-arginyl-tRNA(Arg) + AMP + diphosphate. This is Arginine--tRNA ligase from Campylobacter jejuni subsp. jejuni serotype O:23/36 (strain 81-176).